The chain runs to 363 residues: Branched-chain-amino-acid aminotransferase 2 (363 aa).

At Lys197 the chain carries N6-(pyridoxal phosphate)lysine.

It belongs to the class-IV pyridoxal-phosphate-dependent aminotransferase family. It depends on pyridoxal 5'-phosphate as a cofactor.

The enzyme catalyses L-leucine + 2-oxoglutarate = 4-methyl-2-oxopentanoate + L-glutamate. The catalysed reaction is L-isoleucine + 2-oxoglutarate = (S)-3-methyl-2-oxopentanoate + L-glutamate. It carries out the reaction L-valine + 2-oxoglutarate = 3-methyl-2-oxobutanoate + L-glutamate. The protein operates within amino-acid biosynthesis; L-isoleucine biosynthesis; L-isoleucine from 2-oxobutanoate: step 4/4. It functions in the pathway amino-acid biosynthesis; L-leucine biosynthesis; L-leucine from 3-methyl-2-oxobutanoate: step 4/4. It participates in amino-acid biosynthesis; L-valine biosynthesis; L-valine from pyruvate: step 4/4. Inhibited by canaline. In terms of biological role, transaminates branched-chain amino acids and ketoglutarate. This Bacillus subtilis (strain 168) protein is Branched-chain-amino-acid aminotransferase 2 (ilvK).